Reading from the N-terminus, the 131-residue chain is Large-conductance mechanosensitive channel (131 aa).

2 helical membrane passes run 14–34 and 71–91; these read VMDM…VTSL and GNFI…FLLV.

It belongs to the MscL family. As to quaternary structure, homopentamer.

Its subcellular location is the cell inner membrane. Its function is as follows. Channel that opens in response to stretch forces in the membrane lipid bilayer. May participate in the regulation of osmotic pressure changes within the cell. The polypeptide is Large-conductance mechanosensitive channel (Dinoroseobacter shibae (strain DSM 16493 / NCIMB 14021 / DFL 12)).